The sequence spans 188 residues: HTH-type transcriptional regulator LmrA (188 aa).

Positions 4–64 (GDSREKILSA…IEAVNEMKEY (61 aa)) constitute an HTH tetR-type domain. Positions 27–46 (GLNQIIKESGAPKGSLYYHF) form a DNA-binding region, H-T-H motif.

Acts as a repressor of the lincomycin-resistance (lmrAB) and yxaGH operons. The protein is HTH-type transcriptional regulator LmrA (lmrA) of Bacillus subtilis (strain 168).